We begin with the raw amino-acid sequence, 823 residues long: NAD-dependent histone deacetylase sirtuin-1 (823 aa).

The segment covering Leu-41 to Ala-67 has biased composition (low complexity). Residues Leu-41 to Glu-146 are disordered. The span at Gly-72–Thr-95 shows a compositional bias: basic and acidic residues. Residues Glu-104–Ser-137 show a composition bias toward acidic residues. One can recognise a Deacetylase sirtuin-type domain in the interval Lys-204–Glu-499. NAD(+)-binding positions include Gly-229–Tyr-248 and Gln-313–Asp-316. His-331 serves as the catalytic Proton acceptor. Residues Cys-339, Cys-342, Cys-363, and Cys-366 each contribute to the Zn(2+) site. Residues Gly-427–Ser-429, Asn-452–Glu-454, and Ser-469 contribute to the NAD(+) site. Phosphoserine occurs at positions 618 and 621. Residues Asp-698–Glu-707 show a composition bias toward acidic residues. 2 disordered regions span residues Asp-698–Gly-722 and Ile-777–Val-823. The segment covering Pro-798 to Glu-813 has biased composition (basic and acidic residues). Over residues Ser-814–Val-823 the composition is skewed to pro residues.

The protein belongs to the sirtuin family. Class I subfamily. Interacts with the transcriptional repressors hairy (hry) and deadpan (dpn); via basic domains. Associates with the Esc/E(z) histone methyltransferase complex. Interacts directly with E(z) and HDAC1/Rpd3. The cofactor is Zn(2+).

The protein localises to the cytoplasm. It is found in the nucleus. The protein resides in the chromosome. The catalysed reaction is N(6)-acetyl-L-lysyl-[protein] + NAD(+) + H2O = 2''-O-acetyl-ADP-D-ribose + nicotinamide + L-lysyl-[protein]. Its function is as follows. NAD-dependent histone deacetylase involved in heterochromatic silencing. Mildly suppresses the heterochromatin-mediated silencing phenomenon known as position-effect variegation (PEV). Required for epigenetic silencing of the polycomb group proteins. Has histone H4 deacetylase activity in vitro. Required maternally for establishing proper segmentation of the embryo. Involved in sex determination. May be involved in the regulation of life span. This is NAD-dependent histone deacetylase sirtuin-1 from Drosophila melanogaster (Fruit fly).